The following is a 482-amino-acid chain: Methylenetetrahydrofolate--tRNA-(uracil-5-)-methyltransferase TrmFO (482 aa).

Residue 11–16 participates in FAD binding; it reads GGGLAG. A disordered region spans residues 450-482; it reads LRQPSPWSAEDSPRAALPIPEPTPLGPASGSSE.

Belongs to the MnmG family. TrmFO subfamily. FAD is required as a cofactor.

The protein localises to the cytoplasm. It catalyses the reaction uridine(54) in tRNA + (6R)-5,10-methylene-5,6,7,8-tetrahydrofolate + NADH + H(+) = 5-methyluridine(54) in tRNA + (6S)-5,6,7,8-tetrahydrofolate + NAD(+). It carries out the reaction uridine(54) in tRNA + (6R)-5,10-methylene-5,6,7,8-tetrahydrofolate + NADPH + H(+) = 5-methyluridine(54) in tRNA + (6S)-5,6,7,8-tetrahydrofolate + NADP(+). In terms of biological role, catalyzes the folate-dependent formation of 5-methyl-uridine at position 54 (M-5-U54) in all tRNAs. The chain is Methylenetetrahydrofolate--tRNA-(uracil-5-)-methyltransferase TrmFO from Rhodospirillum rubrum (strain ATCC 11170 / ATH 1.1.1 / DSM 467 / LMG 4362 / NCIMB 8255 / S1).